Reading from the N-terminus, the 346-residue chain is Transcription termination factor 4, mitochondrial (346 aa).

A mitochondrion-targeting transit peptide spans 1-42; sequence MASLGRQVPEWHRLLALSWACLVRQTPHLREQKQMSPSLSCK. MTERF repeat units follow at residues 142–172, 177–204, 209–239, 245–270, and 290–318; these read FNAL…LGLG, KRVL…LREK, AQHI…YAYF, HLDI…YLER, and LRNI…VFKK. Residues 310 to 327 form a dimerization with NSUN4 region; sequence VEEFQVFKKLLDQEEEEE. Residues 321–346 form a disordered region; it reads DQEEEEESESHASEEEEEEEEEEELL. Residues 322 to 346 are compositionally biased toward acidic residues; the sequence is QEEEEESESHASEEEEEEEEEEELL.

The protein belongs to the mTERF family. Heterodimer with NSUN4; this interaction may be required for NSUN4 recruitment to the mitochondrial large ribosomal subunit. As to expression, widely expressed, with highest levels in liver, followed by testis, kidney and brain.

Its subcellular location is the mitochondrion. Functionally, regulator of mitochondrial ribosome biogenesis and translation. Binds to mitochondrial ribosomal RNAs 16S, 12S and 7S. Targets NSUN4 RNA methyltransferase to the mitochondrial large ribosomal subunit. In Mus musculus (Mouse), this protein is Transcription termination factor 4, mitochondrial (Mterf4).